The primary structure comprises 259 residues: O-antigen export system permease protein RfbA (259 aa).

The next 6 helical transmembrane spans lie at 33 to 53 (FGYL…YFIF), 73 to 95 (FPWQ…NAQI), 111 to 131 (VMME…FLFV), 142 to 162 (WGIP…SIIF), 176 to 196 (VSLG…SDMI), and 228 to 248 (EYIS…LAIF). Residues 33–251 (FGYLWSIANP…IVGLAIFNKL (219 aa)) form the ABC transmembrane type-2 domain.

It belongs to the ABC-2 integral membrane protein family.

Its subcellular location is the cell inner membrane. May form an ATP-driven O-antigen export apparatus, in association with RfbB. This chain is O-antigen export system permease protein RfbA (rfbA), found in Klebsiella pneumoniae.